A 143-amino-acid chain; its full sequence is uncharacterized protein (143 aa).

It localises to the cytoplasm. It is found in the nucleus. This is an uncharacterized protein from Schizosaccharomyces pombe (strain 972 / ATCC 24843) (Fission yeast).